The sequence spans 147 residues: Large ribosomal subunit protein uL13 (147 aa).

It belongs to the universal ribosomal protein uL13 family. Part of the 50S ribosomal subunit.

In terms of biological role, this protein is one of the early assembly proteins of the 50S ribosomal subunit, although it is not seen to bind rRNA by itself. It is important during the early stages of 50S assembly. The chain is Large ribosomal subunit protein uL13 from Micrococcus luteus (strain ATCC 4698 / DSM 20030 / JCM 1464 / CCM 169 / CCUG 5858 / IAM 1056 / NBRC 3333 / NCIMB 9278 / NCTC 2665 / VKM Ac-2230) (Micrococcus lysodeikticus).